A 413-amino-acid chain; its full sequence is PCI domain-containing protein 2 homolog (413 aa).

Residues 222 to 403 (VAYNYFLGRK…QKLVISKTNA (182 aa)) enclose the PCI domain.

Belongs to the CSN12 family.

This is PCI domain-containing protein 2 homolog from Caenorhabditis briggsae.